The primary structure comprises 418 residues: Gamma-glutamyl phosphate reductase (418 aa).

This sequence belongs to the gamma-glutamyl phosphate reductase family.

It is found in the cytoplasm. It catalyses the reaction L-glutamate 5-semialdehyde + phosphate + NADP(+) = L-glutamyl 5-phosphate + NADPH + H(+). It participates in amino-acid biosynthesis; L-proline biosynthesis; L-glutamate 5-semialdehyde from L-glutamate: step 2/2. Functionally, catalyzes the NADPH-dependent reduction of L-glutamate 5-phosphate into L-glutamate 5-semialdehyde and phosphate. The product spontaneously undergoes cyclization to form 1-pyrroline-5-carboxylate. The protein is Gamma-glutamyl phosphate reductase of Lacticaseibacillus paracasei (strain ATCC 334 / BCRC 17002 / CCUG 31169 / CIP 107868 / KCTC 3260 / NRRL B-441) (Lactobacillus paracasei).